Consider the following 356-residue polypeptide: Arginine kinase (356 aa).

Alanine 2 bears the N-acetylalanine mark. Residues 9-91 (KLEEGFKKLE…FDPIIEDYHK (83 aa)) form the Phosphagen kinase N-terminal domain. 64–68 (GVGIY) lines the L-arginine pocket. Residues 119-356 (FVISTRVRCG…LELIKIEKEM (238 aa)) enclose the Phosphagen kinase C-terminal domain. Residues 122–126 (STRVR) and histidine 185 each bind ATP. Glutamate 225 contributes to the L-arginine binding site. Residue arginine 229 participates in ATP binding. Cysteine 271 is an L-arginine binding site. Residues 280–284 (RASVH) and 309–314 (RGTRGE) each bind ATP. Glutamate 314 serves as a coordination point for L-arginine.

This sequence belongs to the ATP:guanido phosphotransferase family.

It carries out the reaction L-arginine + ATP = N(omega)-phospho-L-arginine + ADP + H(+). The sequence is that of Arginine kinase from Homarus gammarus (European lobster).